A 214-amino-acid chain; its full sequence is Imidazole glycerol phosphate synthase subunit HisH (214 aa).

Residues 2-214 (RVALIDYGSG…LIANFLRWAP (213 aa)) form the Glutamine amidotransferase type-1 domain. C88 acts as the Nucleophile in catalysis. Catalysis depends on residues H194 and E196.

In terms of assembly, heterodimer of HisH and HisF.

The protein localises to the cytoplasm. It carries out the reaction 5-[(5-phospho-1-deoxy-D-ribulos-1-ylimino)methylamino]-1-(5-phospho-beta-D-ribosyl)imidazole-4-carboxamide + L-glutamine = D-erythro-1-(imidazol-4-yl)glycerol 3-phosphate + 5-amino-1-(5-phospho-beta-D-ribosyl)imidazole-4-carboxamide + L-glutamate + H(+). The enzyme catalyses L-glutamine + H2O = L-glutamate + NH4(+). Its pathway is amino-acid biosynthesis; L-histidine biosynthesis; L-histidine from 5-phospho-alpha-D-ribose 1-diphosphate: step 5/9. Functionally, IGPS catalyzes the conversion of PRFAR and glutamine to IGP, AICAR and glutamate. The HisH subunit catalyzes the hydrolysis of glutamine to glutamate and ammonia as part of the synthesis of IGP and AICAR. The resulting ammonia molecule is channeled to the active site of HisF. The polypeptide is Imidazole glycerol phosphate synthase subunit HisH (Rhodospirillum rubrum (strain ATCC 11170 / ATH 1.1.1 / DSM 467 / LMG 4362 / NCIMB 8255 / S1)).